A 198-amino-acid chain; its full sequence is TATA-box-binding protein (198 aa).

2 tandem repeats follow at residues 14–90 (IENI…IKTL) and 105–181 (IQNI…FDKL).

The protein belongs to the TBP family.

General factor that plays a role in the activation of archaeal genes transcribed by RNA polymerase. Binds specifically to the TATA box promoter element which lies close to the position of transcription initiation. The polypeptide is TATA-box-binding protein (Saccharolobus shibatae (strain ATCC 51178 / DSM 5389 / JCM 8931 / NBRC 15437 / B12) (Sulfolobus shibatae)).